We begin with the raw amino-acid sequence, 314 residues long: Transmembrane protein 248 (314 aa).

A helical membrane pass occupies residues Val-21 to Phe-41. Positions Leu-78 to Asp-106 are disordered. Residues Asn-80–Gln-102 are compositionally biased toward polar residues. The next 3 membrane-spanning stretches (helical) occupy residues Gln-179 to Val-199, Phe-236 to Val-258, and Leu-270 to Ile-290.

This sequence belongs to the TMEM248 family.

The protein localises to the membrane. The chain is Transmembrane protein 248 (TMEM248) from Homo sapiens (Human).